The following is a 177-amino-acid chain: Ribosome maturation factor RimM (177 aa).

The PRC barrel domain maps to 98 to 177; sequence GEEFYWRELY…RIEVDWDPGF (80 aa).

Belongs to the RimM family. As to quaternary structure, binds ribosomal protein uS19.

It is found in the cytoplasm. Functionally, an accessory protein needed during the final step in the assembly of 30S ribosomal subunit, possibly for assembly of the head region. Essential for efficient processing of 16S rRNA. May be needed both before and after RbfA during the maturation of 16S rRNA. It has affinity for free ribosomal 30S subunits but not for 70S ribosomes. The chain is Ribosome maturation factor RimM from Photobacterium profundum (strain SS9).